The sequence spans 739 residues: Cellulose synthase catalytic subunit [UDP-forming] (739 aa).

Helical transmembrane passes span 36–55, 59–76, 83–101, and 116–138; these read VLVV…IISA, LYSQ…VLVL, LAIL…RYMF, and MFFG…FGYV. Residues 157-250 are catalytic subdomain A; it reads EWPTVDVFIP…YIALFDADHV (94 aa). Aspartate 199 is a catalytic residue. 2 residues coordinate substrate: aspartate 246 and aspartate 248. Residues 327–387 are catalytic subdomain B; sequence EPLLEIGGVA…NQRIRWARGM (61 aa). Aspartate 343 is an active-site residue. Helical transmembrane passes span 417 to 436, 440 to 462, 524 to 546, and 551 to 573; these read FFYG…YLIF, IFHA…SSLT, PYLV…LIWG, and AVTV…AAVA. The PilZ domain maps to 580 to 677; that stretch reads QVRSEPRVSA…QSELVRLTFS (98 aa).

It belongs to the glycosyltransferase 2 family. Mg(2+) serves as cofactor.

The protein localises to the cell inner membrane. It carries out the reaction [(1-&gt;4)-beta-D-glucosyl](n) + UDP-alpha-D-glucose = [(1-&gt;4)-beta-D-glucosyl](n+1) + UDP + H(+). Its pathway is glycan metabolism; bacterial cellulose biosynthesis. Its activity is regulated as follows. Activated by bis-(3'-5') cyclic diguanylic acid (c-di-GMP). Functionally, catalytic subunit of cellulose synthase. It polymerizes uridine 5'-diphosphate glucose to cellulose, which is produced as an extracellular component responsible for the structural integrity and rigidity of self-supporting mats characteristic of the 'wrinkly spreader' phenotype. The protein is Cellulose synthase catalytic subunit [UDP-forming] (bcsA) of Pseudomonas fluorescens (strain SBW25).